We begin with the raw amino-acid sequence, 297 residues long: Formamidopyrimidine-DNA glycosylase (297 aa).

Pro2 acts as the Schiff-base intermediate with DNA in catalysis. Glu3 (proton donor) is an active-site residue. Lys61 acts as the Proton donor; for beta-elimination activity in catalysis. Positions 120 and 176 each coordinate DNA. An FPG-type zinc finger spans residues 262-296; sequence HVYGRQGQPCDRCGTAIVRESFMNRGSHFCPRCQR. The Proton donor; for delta-elimination activity role is filled by Arg286.

The protein belongs to the FPG family. Monomer. Zn(2+) is required as a cofactor.

It carries out the reaction Hydrolysis of DNA containing ring-opened 7-methylguanine residues, releasing 2,6-diamino-4-hydroxy-5-(N-methyl)formamidopyrimidine.. The enzyme catalyses 2'-deoxyribonucleotide-(2'-deoxyribose 5'-phosphate)-2'-deoxyribonucleotide-DNA = a 3'-end 2'-deoxyribonucleotide-(2,3-dehydro-2,3-deoxyribose 5'-phosphate)-DNA + a 5'-end 5'-phospho-2'-deoxyribonucleoside-DNA + H(+). In terms of biological role, involved in base excision repair of DNA damaged by oxidation or by mutagenic agents. Acts as a DNA glycosylase that recognizes and removes damaged bases. Has a preference for oxidized purines, such as 7,8-dihydro-8-oxoguanine (8-oxoG). Has AP (apurinic/apyrimidinic) lyase activity and introduces nicks in the DNA strand. Cleaves the DNA backbone by beta-delta elimination to generate a single-strand break at the site of the removed base with both 3'- and 5'-phosphates. The polypeptide is Formamidopyrimidine-DNA glycosylase (Leifsonia xyli subsp. xyli (strain CTCB07)).